The following is a 555-amino-acid chain: MAAACRSEAGLLPSLLCRRPAGAQLLRVALCLLCWVPAAVDAVPELGLWTRTVNDKSGPLVFRKTMFNSTEIKFSVKSFSCSGPVKFTIEWHLKYHTCHNDYPDLEEELSQRHELHADPDVCAYFKNIDCWTTKSENLDCSSDSQAFPSLNNKELTGIRNISSQEGSTDVVARTQKDGFHIFIVSIKTEKTDAVWDLNVSLSMVGPHGYISASDWPLMIFYMVMCIVYILYGVLWLLWSACYWKDILRIQFWIAAVIFLGMLEKAVFYSEYQNINSTGLSTQGLLIFAELISAVKRTLARLLVIIVSLGYGIVKPRLGTVMHRVIGLGLLYLIFAAIEGVMRVIGGSKHLAVVLTDIVLAVIDSIFVWFIFISLAQTMKTLRLRKNTVKFSLYRHFTNTLIFAVLASIVFMVWTTKTFRIAKCQSDWMELWVDDAFWSFLFSVILIVIMFLWRPSANNQRYAFMPLIDDSDDEVEEFMVTSENLTEGIKLRASKTVSNGTAKPTSDNFDEDLKWVEENIPSSFTDVALPVLVDSDEEIMTRSEIAEKMFSSEKIM.

The N-terminal stretch at 1 to 42 (MAAACRSEAGLLPSLLCRRPAGAQLLRVALCLLCWVPAAVDA) is a signal peptide. The Lumenal portion of the chain corresponds to 43-216 (VPELGLWTRT…HGYISASDWP (174 aa)). 3 N-linked (GlcNAc...) asparagine glycosylation sites follow: Asn68, Asn160, and Asn198. A helical membrane pass occupies residues 217–237 (LMIFYMVMCIVYILYGVLWLL). Residues 238–248 (WSACYWKDILR) are Cytoplasmic-facing. The helical transmembrane segment at 249–269 (IQFWIAAVIFLGMLEKAVFYS) threads the bilayer. The Lumenal segment spans residues 270-300 (EYQNINSTGLSTQGLLIFAELISAVKRTLAR). N-linked (GlcNAc...) asparagine glycosylation is present at Asn275. Residues 301–321 (LLVIIVSLGYGIVKPRLGTVM) form a helical membrane-spanning segment. The Cytoplasmic portion of the chain corresponds to 322-323 (HR). A helical transmembrane segment spans residues 324 to 344 (VIGLGLLYLIFAAIEGVMRVI). Residues 345 to 351 (GGSKHLA) are Lumenal-facing. The chain crosses the membrane as a helical span at residues 352 to 372 (VVLTDIVLAVIDSIFVWFIFI). Residues 373-394 (SLAQTMKTLRLRKNTVKFSLYR) are Cytoplasmic-facing. Residues 395–415 (HFTNTLIFAVLASIVFMVWTT) traverse the membrane as a helical segment. Residues 416 to 429 (KTFRIAKCQSDWME) lie on the Lumenal side of the membrane. Residues 430 to 450 (LWVDDAFWSFLFSVILIVIMF) form a helical membrane-spanning segment. The Cytoplasmic portion of the chain corresponds to 451–555 (LWRPSANNQR…EKMFSSEKIM (105 aa)). Phosphoserine is present on residues Ser470, Ser497, and Ser534.

Belongs to the LU7TM family. TMEM87 subfamily.

It localises to the golgi apparatus membrane. In terms of biological role, may be involved in retrograde transport from endosomes to the trans-Golgi network (TGN). The sequence is that of Transmembrane protein 87B from Mus musculus (Mouse).